A 557-amino-acid polypeptide reads, in one-letter code: TGF-beta receptor type-2 (557 aa).

The first 23 residues, Met-1–Pro-23, serve as a signal peptide directing secretion. The Extracellular portion of the chain corresponds to Ala-24–Lys-155. 6 disulfides stabilise this stretch: Cys-41-Cys-74, Cys-44-Cys-61, Cys-51-Cys-57, Cys-67-Cys-91, Cys-111-Cys-126, and Cys-128-Cys-133. Residues Asn-62 and Asn-84 are each glycosylated (N-linked (GlcNAc...) asparagine). Residues Val-156 to Tyr-176 form a helical membrane-spanning segment. At Ala-177–Lys-557 the chain is on the cytoplasmic side. The 304-residue stretch at Ile-234–Leu-537 folds into the Protein kinase domain. ATP is bound by residues Val-240 to Val-248 and Lys-267. Residue Asp-369 is the Proton acceptor of the active site.

This sequence belongs to the protein kinase superfamily. TKL Ser/Thr protein kinase family. TGFB receptor subfamily. As to quaternary structure, heterohexamer; TGFB1, TGFB2 and TGFB3 homodimeric ligands assemble a functional receptor composed of two TGFBR1 and TGFBR2 heterodimers to form a ligand-receptor heterohexamer. Mg(2+) serves as cofactor. Mn(2+) is required as a cofactor. Post-translationally, phosphorylated on a Ser/Thr residue in the cytoplasmic domain. Detected at low levels in embryonic heart, brain and lung. Detected at high levels in hatchling heart and lung.

It is found in the cell membrane. Its subcellular location is the membrane raft. It carries out the reaction L-threonyl-[receptor-protein] + ATP = O-phospho-L-threonyl-[receptor-protein] + ADP + H(+). It catalyses the reaction L-seryl-[receptor-protein] + ATP = O-phospho-L-seryl-[receptor-protein] + ADP + H(+). Its function is as follows. Transmembrane serine/threonine kinase forming with the TGF-beta type I serine/threonine kinase receptor, TGFBR1, the non-promiscuous receptor for the TGF-beta cytokines TGFB1, TGFB2 and TGFB3. Transduces the TGFB1, TGFB2 and TGFB3 signal from the cell surface to the cytoplasm and is thus regulating a plethora of physiological and pathological processes including cell cycle arrest in epithelial and hematopoietic cells, control of mesenchymal cell proliferation and differentiation, wound healing, extracellular matrix production, immunosuppression and carcinogenesis. The formation of the receptor complex composed of 2 TGFBR1 and 2 TGFBR2 molecules symmetrically bound to the cytokine dimer results in the phosphorylation and the activation of TGFRB1 by the constitutively active TGFBR2. Activated TGFBR1 phosphorylates SMAD2 which dissociates from the receptor and interacts with SMAD4. The SMAD2-SMAD4 complex is subsequently translocated to the nucleus where it modulates the transcription of the TGF-beta-regulated genes. This constitutes the canonical SMAD-dependent TGF-beta signaling cascade. Also involved in non-canonical, SMAD-independent TGF-beta signaling pathways. This Gallus gallus (Chicken) protein is TGF-beta receptor type-2 (TGFBR2).